The following is a 106-amino-acid chain: Toxin-like structure LSTX-D6 (106 aa).

Residues methionine 1–serine 20 form the signal peptide. Positions glutamate 21–arginine 41 are excised as a propeptide. Intrachain disulfides connect cysteine 45–cysteine 60, cysteine 52–cysteine 69, cysteine 59–cysteine 85, and cysteine 71–cysteine 83.

Belongs to the neurotoxin 19 (CSTX) family. 02 (D7) subfamily. Expressed by the venom gland.

Its subcellular location is the secreted. The chain is Toxin-like structure LSTX-D6 from Lycosa singoriensis (Wolf spider).